The chain runs to 483 residues: L-2-hydroxyglutarate dehydrogenase, mitochondrial (483 aa).

The transit peptide at 1–67 directs the protein to the mitochondrion; the sequence is MKHKPETAAF…VDASKTIVRG (67 aa).

This sequence belongs to the L2HGDH family. FAD serves as cofactor.

It is found in the mitochondrion. The catalysed reaction is (S)-2-hydroxyglutarate + A = 2-oxoglutarate + AH2. Catalyzes the oxidation of (S)-2-hydroxyglutarate to 2-oxoglutarate. Is specific for the (S) enantiomer and possesses very poor activity toward (R)-2-hydroxyglutarate. Has no activity toward related 2-hydroxy acids, such as glycolate, L-lactate or D-lactate. The protein is L-2-hydroxyglutarate dehydrogenase, mitochondrial of Arabidopsis thaliana (Mouse-ear cress).